The chain runs to 595 residues: Probable translation initiation factor IF-2 (595 aa).

In terms of domain architecture, tr-type G spans 11–225 (LRTPIVAVLG…ILVGLAQRYL (215 aa)). Positions 20-27 (GHVDHGKT) are G1. 20 to 27 (GHVDHGKT) serves as a coordination point for GTP. Positions 45-49 (GITQH) are G2. The G3 stretch occupies residues 81 to 84 (DTPG). Residues 81 to 85 (DTPGH) and 135 to 138 (NKID) contribute to the GTP site. A G4 region spans residues 135 to 138 (NKID). Residues 203-205 (SAL) form a G5 region.

The protein belongs to the TRAFAC class translation factor GTPase superfamily. Classic translation factor GTPase family. IF-2 subfamily.

Functionally, function in general translation initiation by promoting the binding of the formylmethionine-tRNA to ribosomes. Seems to function along with eIF-2. The sequence is that of Probable translation initiation factor IF-2 (infB) from Archaeoglobus fulgidus (strain ATCC 49558 / DSM 4304 / JCM 9628 / NBRC 100126 / VC-16).